A 149-amino-acid polypeptide reads, in one-letter code: Large ribosomal subunit protein uL13 (149 aa).

Belongs to the universal ribosomal protein uL13 family. In terms of assembly, part of the 50S ribosomal subunit.

Its function is as follows. This protein is one of the early assembly proteins of the 50S ribosomal subunit, although it is not seen to bind rRNA by itself. It is important during the early stages of 50S assembly. This Thermobifida fusca (strain YX) protein is Large ribosomal subunit protein uL13.